The following is a 650-amino-acid chain: Probable Xaa-Pro aminopeptidase P (650 aa).

Positions 447, 458, 556, and 570 each coordinate Mn(2+).

The protein belongs to the peptidase M24B family. Mn(2+) serves as cofactor.

The catalysed reaction is Release of any N-terminal amino acid, including proline, that is linked to proline, even from a dipeptide or tripeptide.. Functionally, catalyzes the removal of a penultimate prolyl residue from the N-termini of peptides. In Phaeosphaeria nodorum (strain SN15 / ATCC MYA-4574 / FGSC 10173) (Glume blotch fungus), this protein is Probable Xaa-Pro aminopeptidase P (AMPP).